Reading from the N-terminus, the 122-residue chain is UPF0102 protein RHE_CH00320 (122 aa).

This sequence belongs to the UPF0102 family.

The polypeptide is UPF0102 protein RHE_CH00320 (Rhizobium etli (strain ATCC 51251 / DSM 11541 / JCM 21823 / NBRC 15573 / CFN 42)).